A 210-amino-acid chain; its full sequence is Proteasome subunit beta (210 aa).

Positions 1–9 (MDNDKYLKG) are cleaved as a propeptide — removed in mature form; by autocatalysis. The active-site Nucleophile is Thr10.

Belongs to the peptidase T1B family. As to quaternary structure, the 20S proteasome core is composed of 14 alpha and 14 beta subunits that assemble into four stacked heptameric rings, resulting in a barrel-shaped structure. The two inner rings, each composed of seven catalytic beta subunits, are sandwiched by two outer rings, each composed of seven alpha subunits. The catalytic chamber with the active sites is on the inside of the barrel. Has a gated structure, the ends of the cylinder being occluded by the N-termini of the alpha-subunits. Is capped at one or both ends by the proteasome regulatory ATPase, PAN.

Its subcellular location is the cytoplasm. The enzyme catalyses Cleavage of peptide bonds with very broad specificity.. The formation of the proteasomal ATPase PAN-20S proteasome complex, via the docking of the C-termini of PAN into the intersubunit pockets in the alpha-rings, triggers opening of the gate for substrate entry. Interconversion between the open-gate and close-gate conformations leads to a dynamic regulation of the 20S proteasome proteolysis activity. Functionally, component of the proteasome core, a large protease complex with broad specificity involved in protein degradation. This Methanosarcina thermophila protein is Proteasome subunit beta.